A 210-amino-acid chain; its full sequence is 3-hexulose-6-phosphate synthase (210 aa).

It belongs to the HPS/KGPDC family. HPS subfamily.

The catalysed reaction is D-ribulose 5-phosphate + formaldehyde = D-arabino-hex-3-ulose 6-phosphate. It functions in the pathway one-carbon metabolism; formaldehyde assimilation via RuMP pathway; D-fructose 6-phosphate from D-ribulose 5-phosphate and formaldehyde: step 1/2. Functionally, catalyzes the condensation of ribulose 5-phosphate with formaldehyde to form 3-hexulose 6-phosphate. The protein is 3-hexulose-6-phosphate synthase of Staphylococcus aureus (strain MRSA252).